The primary structure comprises 1242 residues: Myosin-16 (1242 aa).

The Myosin N-terminal SH3-like domain maps to 6–55 (MVDSHVWVEDPERAWIDGVVLNIKGEEAEIKTNDGRDVIANLSRLYPKDT). A Myosin motor domain is found at 60 to 729 (EGVEDMTRLS…QMAELDAHRT (670 aa)). Residues 154-161 (GESGSGKT) and 207-215 (NNNSSRFGK) contribute to the ATP site. Actin-binding stretches follow at residues 493 to 527 (LIEK…YHTF), 529 to 552 (DHKR…AGDV), 587 to 610 (FPPL…KLQL), and 610 to 632 (LQQL…KPNN). IQ domains lie at 732 to 761 (LGES…ASVN), 755 to 784 (MRRA…EEAA), 780 to 809 (REEA…SALT), 803 to 832 (TKSS…TRAA), 828 to 857 (TTRA…VSLL), and 851 to 880 (LKRV…ADRK). Disordered stretches follow at residues 869-893 (KQLG…ELSN) and 908-1042 (EQSD…ERKT). Basic and acidic residues predominate over residues 876-893 (QADRKEETEKERKVELSN). 6 consecutive repeat copies span residues 876–908 (QADR…LHSE), 909–940 (QSDD…LHSE), 941–965 (QSDD…GHSD), 966–997 (QSDD…MHSD), 998–1029 (QSDD…VHSD), and 1030–1061 (QSDD…TCSE). Positions 876–1061 (QADRKEETEK…IQKSFVTCSE (186 aa)) are 6 X 33 AA repeats of Q-S-D-D-x-E-E-x(2)-H-x-R-K-x-K-x(2)-I-x(2)-E-D-G-x(3)-S-x-V-x-H-S-x. Residues 948–966 (GHERKTKLSIESEDGHSDQ) are compositionally biased toward basic and acidic residues. Residues 1079–1142 (DTEIESLTAE…QLQDSLNRLL (64 aa)) are a coiled coil. A disordered region spans residues 1175 to 1242 (DLADSSENSE…DKEGGFEDYF (68 aa)). Residues 1179-1191 (SSENSEASSSDSD) show a composition bias toward low complexity. Residues 1199-1224 (PSSDNFSTFNPNQLQVIVQDLSTTEA) are compositionally biased toward polar residues. Residues 1225–1242 (KGTESYDSDKEGGFEDYF) show a composition bias toward basic and acidic residues.

The protein belongs to the TRAFAC class myosin-kinesin ATPase superfamily. Myosin family. Plant myosin class XI subfamily. Homodimer. In terms of tissue distribution, expressed in flowers and leaves.

The protein localises to the cytoplasm. Myosin heavy chain that is required for the cell cycle-regulated transport of various organelles and proteins for their segregation. Functions by binding with its tail domain to receptor proteins on organelles and exerting force with its N-terminal motor domain against actin filaments, thereby transporting its cargo along polarized actin cables. The polypeptide is Myosin-16 (XI-J) (Arabidopsis thaliana (Mouse-ear cress)).